Reading from the N-terminus, the 464-residue chain is tRNA-2-methylthio-N(6)-dimethylallyladenosine synthase (464 aa).

The region spanning 4–119 (RTFHIMTFGC…APQAIERLVQ (116 aa)) is the MTTase N-terminal domain. The [4Fe-4S] cluster site is built by Cys-13, Cys-48, Cys-82, Cys-158, Cys-162, and Cys-165. One can recognise a Radical SAM core domain in the interval 144–375 (GEVPVSAYVN…QEVQNEYSEA (232 aa)). The region spanning 378-461 (QAMVGKTVMV…KHSLTGEPAG (84 aa)) is the TRAM domain. The interval 393–420 (SPKSAAGSGTDAQNAAEESGRTASSWQG) is disordered.

It belongs to the methylthiotransferase family. MiaB subfamily. As to quaternary structure, monomer. [4Fe-4S] cluster is required as a cofactor.

It is found in the cytoplasm. The catalysed reaction is N(6)-dimethylallyladenosine(37) in tRNA + (sulfur carrier)-SH + AH2 + 2 S-adenosyl-L-methionine = 2-methylsulfanyl-N(6)-dimethylallyladenosine(37) in tRNA + (sulfur carrier)-H + 5'-deoxyadenosine + L-methionine + A + S-adenosyl-L-homocysteine + 2 H(+). Catalyzes the methylthiolation of N6-(dimethylallyl)adenosine (i(6)A), leading to the formation of 2-methylthio-N6-(dimethylallyl)adenosine (ms(2)i(6)A) at position 37 in tRNAs that read codons beginning with uridine. This is tRNA-2-methylthio-N(6)-dimethylallyladenosine synthase from Oleidesulfovibrio alaskensis (strain ATCC BAA-1058 / DSM 17464 / G20) (Desulfovibrio alaskensis).